We begin with the raw amino-acid sequence, 304 residues long: Methionyl-tRNA formyltransferase (304 aa).

110 to 113 (SLLP) contacts (6S)-5,6,7,8-tetrahydrofolate.

This sequence belongs to the Fmt family.

The enzyme catalyses L-methionyl-tRNA(fMet) + (6R)-10-formyltetrahydrofolate = N-formyl-L-methionyl-tRNA(fMet) + (6S)-5,6,7,8-tetrahydrofolate + H(+). Attaches a formyl group to the free amino group of methionyl-tRNA(fMet). The formyl group appears to play a dual role in the initiator identity of N-formylmethionyl-tRNA by promoting its recognition by IF2 and preventing the misappropriation of this tRNA by the elongation apparatus. This is Methionyl-tRNA formyltransferase from Gluconobacter oxydans (strain 621H) (Gluconobacter suboxydans).